A 182-amino-acid chain; its full sequence is ATP synthase subunit delta (182 aa).

The protein belongs to the ATPase delta chain family. F-type ATPases have 2 components, F(1) - the catalytic core - and F(0) - the membrane proton channel. F(1) has five subunits: alpha(3), beta(3), gamma(1), delta(1), epsilon(1). CF(0) has four main subunits: a(1), b(1), b'(1) and c(10-14). The alpha and beta chains form an alternating ring which encloses part of the gamma chain. F(1) is attached to F(0) by a central stalk formed by the gamma and epsilon chains, while a peripheral stalk is formed by the delta, b and b' chains.

The protein localises to the cellular thylakoid membrane. Functionally, f(1)F(0) ATP synthase produces ATP from ADP in the presence of a proton or sodium gradient. F-type ATPases consist of two structural domains, F(1) containing the extramembraneous catalytic core and F(0) containing the membrane proton channel, linked together by a central stalk and a peripheral stalk. During catalysis, ATP synthesis in the catalytic domain of F(1) is coupled via a rotary mechanism of the central stalk subunits to proton translocation. This protein is part of the stalk that links CF(0) to CF(1). It either transmits conformational changes from CF(0) to CF(1) or is implicated in proton conduction. The chain is ATP synthase subunit delta from Synechococcus sp. (strain JA-2-3B'a(2-13)) (Cyanobacteria bacterium Yellowstone B-Prime).